We begin with the raw amino-acid sequence, 436 residues long: UPF0229 protein Meso_0256 (436 aa).

Residues 53-110 (PMPARGTSEPTFRPDRSSGERGYILPGNKEFAPGDRLPKPGASGGEGGTGAGRGGSDD) form a disordered region. Gly residues predominate over residues 94-106 (ASGGEGGTGAGRG).

It belongs to the UPF0229 family.

The protein is UPF0229 protein Meso_0256 of Chelativorans sp. (strain BNC1).